The primary structure comprises 336 residues: DNA-directed RNA polymerase subunit alpha (336 aa).

The interval 1–234 (MIEFVIPKKL…NHFKIVTEGL (234 aa)) is alpha N-terminal domain (alpha-NTD). The tract at residues 269–336 (VYNRKIDELE…KFGLELRKGE (68 aa)) is alpha C-terminal domain (alpha-CTD).

The protein belongs to the RNA polymerase alpha chain family. Homodimer. The RNAP catalytic core consists of 2 alpha, 1 beta, 1 beta' and 1 omega subunit. When a sigma factor is associated with the core the holoenzyme is formed, which can initiate transcription.

The enzyme catalyses RNA(n) + a ribonucleoside 5'-triphosphate = RNA(n+1) + diphosphate. DNA-dependent RNA polymerase catalyzes the transcription of DNA into RNA using the four ribonucleoside triphosphates as substrates. This Thermotoga petrophila (strain ATCC BAA-488 / DSM 13995 / JCM 10881 / RKU-1) protein is DNA-directed RNA polymerase subunit alpha.